Reading from the N-terminus, the 284-residue chain is Trimeric intracellular cation channel type B-B (284 aa).

Over 1-15 (MESLSEVSVQFSQLS) the chain is Lumenal. A helical membrane pass occupies residues 16–32 (MFPFFDMAHYLASVMSA). The Cytoplasmic portion of the chain corresponds to 33 to 44 (REQAGALDIASH). Residues 45 to 68 (SPMASWFSAMLHCFGGGILSSILL) traverse the membrane as a helical segment. At 69–79 (AEPPVGILANT) the chain is on the lumenal side. Residues 80–99 (TNIMLASAIWYMVYYFPYDL) form a helical membrane-spanning segment. At 100–102 (FYN) the chain is on the cytoplasmic side. A helical transmembrane segment spans residues 103–121 (CFFFLPIRLIAAGMKEVTR). A 1,2-diacyl-sn-glycero-3-phospho-(1D-myo-inositol-4,5-bisphosphate)-binding residues include Lys117 and Arg121. Residues 122 to 139 (TWKILSGITHAHSHYKDA) lie on the Lumenal side of the membrane. A helical membrane pass occupies residues 140–157 (WLVMITIGWARGAGGGLI). The Cytoplasmic portion of the chain corresponds to 158–178 (SNFEQLVRGVWKPESNEFLKM). A helical transmembrane segment spans residues 179–196 (SYPVKVTLIGAVLFTLQH). The Lumenal portion of the chain corresponds to 197–204 (GHYLPISR). The chain crosses the membrane as a helical span at residues 205–225 (HNLMFIYTMFLVSIKVTMMLT). Topologically, residues 226 to 284 (HSAGSPFLPLETPLHRILFGLRQNQAEVRESPSSSGAKGKPSKKTLDKDSGEQSNKKDK) are cytoplasmic. Residues 250-284 (QAEVRESPSSSGAKGKPSKKTLDKDSGEQSNKKDK) are disordered. Basic and acidic residues predominate over residues 269–284 (KTLDKDSGEQSNKKDK).

The protein belongs to the TMEM38 family. In terms of assembly, homotrimer; conformation seems to be controled by binding to diacylglycerol (DAG).

It is found in the endoplasmic reticulum membrane. The enzyme catalyses K(+)(in) = K(+)(out). Its activity is regulated as follows. Channel activity is activated by increased cytosolic Ca(2+) levels and blocked by luminal high Ca(2+) levels. Functionally, intracellular monovalent cation channel required for maintenance of rapid intracellular calcium release. Acts as a potassium counter-ion channel that functions in synchronization with calcium release from intracellular stores. Activated by increased cytosolic Ca(2+) levels. This Xenopus laevis (African clawed frog) protein is Trimeric intracellular cation channel type B-B (tmem38b-b).